Here is a 466-residue protein sequence, read N- to C-terminus: Asparagine--tRNA ligase (466 aa).

Belongs to the class-II aminoacyl-tRNA synthetase family. Homodimer.

The protein resides in the cytoplasm. It carries out the reaction tRNA(Asn) + L-asparagine + ATP = L-asparaginyl-tRNA(Asn) + AMP + diphosphate + H(+). This is Asparagine--tRNA ligase from Shewanella frigidimarina (strain NCIMB 400).